We begin with the raw amino-acid sequence, 330 residues long: Phospholipase C (330 aa).

Positions 1 to 34 (MVKKTKSNSLKKVATLALANLLLVGALTDNSAKA) are cleaved as a signal peptide. Cysteines 155 and 191 form a disulfide.

The protein belongs to the neutral sphingomyelinase family. As to quaternary structure, monomer.

Its subcellular location is the secreted. It catalyses the reaction a 1,2-diacyl-sn-glycero-3-phosphocholine + H2O = phosphocholine + a 1,2-diacyl-sn-glycerol + H(+). Its function is as follows. Bacterial hemolysins are exotoxins that attack blood cell membranes and cause cell rupture. Beta-hemolysin is a phospholipase C with specific activity toward sphingomyelins. Has a high specificity for sphingomyelin, hydrolyzes lysophosphatidylcholine at a much lower rate, but has no activity towards phosphatidylcholine, phosphatidylethanolamine, or phosphatidylserine. This Staphylococcus aureus (strain NCTC 8325 / PS 47) protein is Phospholipase C (hlb).